A 355-amino-acid polypeptide reads, in one-letter code: Uroporphyrinogen decarboxylase (355 aa).

Substrate is bound by residues 27 to 31 (RQAGR), Asp-77, Tyr-154, Thr-209, and His-328.

It belongs to the uroporphyrinogen decarboxylase family. As to quaternary structure, homodimer.

It localises to the cytoplasm. The enzyme catalyses uroporphyrinogen III + 4 H(+) = coproporphyrinogen III + 4 CO2. It participates in porphyrin-containing compound metabolism; protoporphyrin-IX biosynthesis; coproporphyrinogen-III from 5-aminolevulinate: step 4/4. Catalyzes the decarboxylation of four acetate groups of uroporphyrinogen-III to yield coproporphyrinogen-III. The sequence is that of Uroporphyrinogen decarboxylase from Aliivibrio salmonicida (strain LFI1238) (Vibrio salmonicida (strain LFI1238)).